Here is a 256-residue protein sequence, read N- to C-terminus: Major prion protein (256 aa).

Positions 1-24 (MVKSHIGSWILVLFVAMWSDVGLC) are cleaved as a signal peptide. The segment at 25–41 (KKRPKPGGGWNTGGSRY) is interaction with ADGRG6. The interval 25–233 (KKRPKPGGGW…ESEAYYQRRA (209 aa)) is interaction with GRB2, ERI3 and SYN1. The interval 28-110 (PKPGGGWNTG…QWNKPSKPKT (83 aa)) is disordered. A run of 5 repeats spans residues 54 to 62 (PQGGGGWGQ), 63 to 70 (PHGGGWGQ), 71 to 78 (PHGGGWGQ), 79 to 86 (PHGGGWGQ), and 87 to 95 (PHGGGGWGQ). The interval 54 to 95 (PQGGGGWGQPHGGGWGQPHGGGWGQPHGGGWGQPHGGGGWGQ) is 5 X 8 AA tandem repeats of P-H-G-G-G-W-G-Q. The span at 55 to 97 (QGGGGWGQPHGGGWGQPHGGGWGQPHGGGWGQPHGGGGWGQGG) shows a compositional bias: gly residues. Cu(2+) is bound by residues histidine 64, glycine 65, glycine 66, histidine 72, glycine 73, glycine 74, histidine 80, glycine 81, glycine 82, histidine 88, glycine 90, and glycine 91. The cysteines at positions 182 and 217 are disulfide-linked. N-linked (GlcNAc...) asparagine glycans are attached at residues asparagine 184 and asparagine 200. The GPI-anchor amidated alanine moiety is linked to residue alanine 233. A propeptide spans 234 to 256 (SAILFSSPPVILLISFLIFLIVG) (removed in mature form).

This sequence belongs to the prion family. Monomer and homodimer. Has a tendency to aggregate into amyloid fibrils containing a cross-beta spine, formed by a steric zipper of superposed beta-strands. Soluble oligomers may represent an intermediate stage on the path to fibril formation. Copper binding may promote oligomerization. Interacts with GRB2, APP, ERI3/PRNPIP and SYN1. Mislocalized cytosolically exposed PrP interacts with MGRN1; this interaction alters MGRN1 subcellular location and causes lysosomal enlargement. Interacts with APP. Interacts with KIAA1191. Interacts with ADGRG6.

Its subcellular location is the cell membrane. It is found in the golgi apparatus. In terms of biological role, its primary physiological function is unclear. May play a role in neuronal development and synaptic plasticity. May be required for neuronal myelin sheath maintenance. May promote myelin homeostasis through acting as an agonist for ADGRG6 receptor. May play a role in iron uptake and iron homeostasis. Soluble oligomers are toxic to cultured neuroblastoma cells and induce apoptosis (in vitro). Association with GPC1 (via its heparan sulfate chains) targets PRNP to lipid rafts. Also provides Cu(2+) or Zn(2+) for the ascorbate-mediated GPC1 deaminase degradation of its heparan sulfate side chains. The protein is Major prion protein (PRNP) of Felis catus (Cat).